The sequence spans 917 residues: Protein translocase subunit SecA (917 aa).

ATP-binding positions include Q87, 105 to 109 (GEGKT), and D516. 4 residues coordinate Zn(2+): C901, C903, C912, and H913.

Belongs to the SecA family. As to quaternary structure, monomer and homodimer. Part of the essential Sec protein translocation apparatus which comprises SecA, SecYEG and auxiliary proteins SecDF-YajC and YidC. It depends on Zn(2+) as a cofactor.

The protein localises to the cell inner membrane. Its subcellular location is the cytoplasm. The enzyme catalyses ATP + H2O + cellular proteinSide 1 = ADP + phosphate + cellular proteinSide 2.. In terms of biological role, part of the Sec protein translocase complex. Interacts with the SecYEG preprotein conducting channel. Has a central role in coupling the hydrolysis of ATP to the transfer of proteins into and across the cell membrane, serving both as a receptor for the preprotein-SecB complex and as an ATP-driven molecular motor driving the stepwise translocation of polypeptide chains across the membrane. In Acidovorax ebreus (strain TPSY) (Diaphorobacter sp. (strain TPSY)), this protein is Protein translocase subunit SecA.